The following is a 548-amino-acid chain: Membrane protein insertase YidC (548 aa).

A helical membrane pass occupies residues 6–26 (NLLVIALLFVSFMIWQAWEQD). Residues 28–55 (NPQPQAQQTTQTTTTAAGSAADQGVPAS) form a disordered region. The segment covering 30-50 (QPQAQQTTQTTTTAAGSAADQ) has biased composition (low complexity). 4 helical membrane-spanning segments follow: residues 350-370 (FVGN…GIMY), 420-440 (LGGC…YYML), 458-478 (LSAQ…MFFI), and 499-519 (PVIF…YYIV).

Belongs to the OXA1/ALB3/YidC family. Type 1 subfamily. Interacts with the Sec translocase complex via SecD. Specifically interacts with transmembrane segments of nascent integral membrane proteins during membrane integration.

The protein resides in the cell inner membrane. Its function is as follows. Required for the insertion and/or proper folding and/or complex formation of integral membrane proteins into the membrane. Involved in integration of membrane proteins that insert both dependently and independently of the Sec translocase complex, as well as at least some lipoproteins. Aids folding of multispanning membrane proteins. This Escherichia coli O127:H6 (strain E2348/69 / EPEC) protein is Membrane protein insertase YidC.